We begin with the raw amino-acid sequence, 175 residues long: Alpha-crystallin B chain (175 aa).

Met-1 is modified (N-acetylmethionine). Ser-19 bears the Phosphoserine mark. O-linked (GlcNAc) serine glycosylation occurs at Ser-41. Ser-45 and Ser-59 each carry phosphoserine. Positions Arg-56–Glu-164 constitute a sHSP domain. His-83 contacts Zn(2+). The residue at position 92 (Lys-92) is an N6-acetyllysine. Residues His-104, Glu-106, His-111, and His-119 each contribute to the Zn(2+) site. A disordered region spans residues Val-142 to Lys-175. Residue Lys-166 is modified to N6-acetyllysine. Thr-170 carries O-linked (GlcNAc) threonine glycosylation.

It belongs to the small heat shock protein (HSP20) family. Heteromer composed of three CRYAA and one CRYAB subunits. Aggregates with homologous proteins, including the small heat shock protein HSPB1, to form large heteromeric complexes. Inter-subunit bridging via zinc ions enhances stability, which is crucial as there is no protein turn over in the lens. Interacts with HSPBAP1 and TTN/titin. Interacts with TMEM109; in the cellular response to DNA damage. Interacts with DES; binds rapidly during early stages of DES filament assembly and a reduced binding seen in the later stages. Interacts with TMED10; the interaction mediates the translocation from the cytoplasm into the ERGIC (endoplasmic reticulum-Golgi intermediate compartment) and thereby secretion. Interacts with ATP6V1A and with MTOR, forming a ternary complex. In terms of tissue distribution, lens as well as other tissues.

The protein resides in the cytoplasm. It localises to the nucleus. The protein localises to the secreted. Its subcellular location is the lysosome. Its function is as follows. May contribute to the transparency and refractive index of the lens. Has chaperone-like activity, preventing aggregation of various proteins under a wide range of stress conditions. In lens epithelial cells, stabilizes the ATP6V1A protein, preventing its degradation by the proteasome. This chain is Alpha-crystallin B chain (CRYAB), found in Oryctolagus cuniculus (Rabbit).